We begin with the raw amino-acid sequence, 438 residues long: Hydrogenobyrinate a,c-diamide synthase (438 aa).

One can recognise a GATase cobBQ-type domain in the interval 247–438 (RIALAEDAAF…TFFHAIAKGG (192 aa)). Cys329 (nucleophile) is an active-site residue.

This sequence belongs to the CobB/CbiA family. Requires Mg(2+) as cofactor.

The catalysed reaction is hydrogenobyrinate + 2 L-glutamine + 2 ATP + 2 H2O = hydrogenobyrinate a,c-diamide + 2 L-glutamate + 2 ADP + 2 phosphate + 2 H(+). Its pathway is cofactor biosynthesis; adenosylcobalamin biosynthesis; cob(II)yrinate a,c-diamide from precorrin-2 (aerobic route): step 9/10. Functionally, catalyzes the ATP-dependent amidation of the two carboxylate groups at positions a and c of hydrogenobyrinate, using either L-glutamine or ammonia as the nitrogen source. This is Hydrogenobyrinate a,c-diamide synthase from Agrobacterium fabrum (strain C58 / ATCC 33970) (Agrobacterium tumefaciens (strain C58)).